The chain runs to 279 residues: Prostatic spermine-binding protein (279 aa).

Residues 1-17 form the signal peptide; that stretch reads MLLLVTLALLAGPTCRA. Gln-18 is subject to Pyrrolidone carboxylic acid. The region spanning 18–151 is the Jacalin-type lectin domain; it reads QNILGNNVGT…LNGMGFKWKN (134 aa). The N-linked (GlcNAc...) asparagine glycan is linked to Asn-62. Acidic residues-rich tracts occupy residues 160-177 and 185-279; these read DDDK…NEED and NDHD…EEEE. The segment at 160–279 is disordered; sequence DDDKEDDDDE…DDDNGDEEEE (120 aa).

To mouse SBP. In terms of tissue distribution, prostate.

Spermine-binding protein is an androgen regulated ventral prostate glycoprotein that binds various polyamines. The chain is Prostatic spermine-binding protein (Sbp) from Rattus norvegicus (Rat).